The primary structure comprises 473 residues: Ribulose bisphosphate carboxylase large chain (473 aa).

Residues 1 to 2 constitute a propeptide that is removed on maturation; the sequence is MS. Proline 3 carries the post-translational modification N-acetylproline. Lysine 14 is modified (N6,N6,N6-trimethyllysine). Positions 123 and 173 each coordinate substrate. Lysine 175 functions as the Proton acceptor in the catalytic mechanism. Lysine 177 serves as a coordination point for substrate. Mg(2+) contacts are provided by lysine 201, aspartate 203, and glutamate 204. Lysine 201 bears the N6-carboxylysine mark. The active-site Proton acceptor is histidine 294. 3 residues coordinate substrate: arginine 295, histidine 327, and serine 379.

The protein belongs to the RuBisCO large chain family. Type I subfamily. Heterohexadecamer of 8 large chains and 8 small chains; disulfide-linked. The disulfide link is formed within the large subunit homodimers. It depends on Mg(2+) as a cofactor. Post-translationally, the disulfide bond which can form in the large chain dimeric partners within the hexadecamer appears to be associated with oxidative stress and protein turnover.

It localises to the plastid. The protein resides in the chloroplast. It carries out the reaction 2 (2R)-3-phosphoglycerate + 2 H(+) = D-ribulose 1,5-bisphosphate + CO2 + H2O. The catalysed reaction is D-ribulose 1,5-bisphosphate + O2 = 2-phosphoglycolate + (2R)-3-phosphoglycerate + 2 H(+). RuBisCO catalyzes two reactions: the carboxylation of D-ribulose 1,5-bisphosphate, the primary event in carbon dioxide fixation, as well as the oxidative fragmentation of the pentose substrate in the photorespiration process. Both reactions occur simultaneously and in competition at the same active site. This is Ribulose bisphosphate carboxylase large chain from Sesbania sesban (Egyptian riverhemp).